We begin with the raw amino-acid sequence, 75 residues long: Small ribosomal subunit protein bS18 (75 aa).

This sequence belongs to the bacterial ribosomal protein bS18 family. As to quaternary structure, part of the 30S ribosomal subunit. Forms a tight heterodimer with protein bS6.

In terms of biological role, binds as a heterodimer with protein bS6 to the central domain of the 16S rRNA, where it helps stabilize the platform of the 30S subunit. The protein is Small ribosomal subunit protein bS18 of Pseudoalteromonas translucida (strain TAC 125).